The primary structure comprises 233 residues: 5'-methylthioadenosine/S-adenosylhomocysteine nucleosidase (233 aa).

The Proton acceptor role is filled by Glu12. Residues Gly78, Ile153, and 174–175 each bind substrate; that span reads ME. The Proton donor role is filled by Asp198.

Belongs to the PNP/UDP phosphorylase family. MtnN subfamily.

It carries out the reaction S-adenosyl-L-homocysteine + H2O = S-(5-deoxy-D-ribos-5-yl)-L-homocysteine + adenine. The enzyme catalyses S-methyl-5'-thioadenosine + H2O = 5-(methylsulfanyl)-D-ribose + adenine. It catalyses the reaction 5'-deoxyadenosine + H2O = 5-deoxy-D-ribose + adenine. It participates in amino-acid biosynthesis; L-methionine biosynthesis via salvage pathway; S-methyl-5-thio-alpha-D-ribose 1-phosphate from S-methyl-5'-thioadenosine (hydrolase route): step 1/2. Functionally, catalyzes the irreversible cleavage of the glycosidic bond in both 5'-methylthioadenosine (MTA) and S-adenosylhomocysteine (SAH/AdoHcy) to adenine and the corresponding thioribose, 5'-methylthioribose and S-ribosylhomocysteine, respectively. Also cleaves 5'-deoxyadenosine, a toxic by-product of radical S-adenosylmethionine (SAM) enzymes, into 5-deoxyribose and adenine. The polypeptide is 5'-methylthioadenosine/S-adenosylhomocysteine nucleosidase (Exiguobacterium sp. (strain ATCC BAA-1283 / AT1b)).